Here is a 571-residue protein sequence, read N- to C-terminus: uncharacterized protein (571 aa).

At 1–3 (MNS) the chain is on the cytoplasmic side. Residues 4–24 (LQILSFVGFTLLVAVITWWKV) traverse the membrane as a helical segment. Residues 25 to 74 (RKTDTGSQQGYFLAGRSLKAPVIAASLMLTNLSTEQLVGLSGQAYKSGMS) are Periplasmic-facing. The helical transmembrane segment at 75–95 (VMGWEVTSAVTLIFLALIFLP) threads the bilayer. Residues 96–118 (RYLKRGIATIPDFLEERYDKTTR) are Cytoplasmic-facing. Residues 119 to 139 (IIIDFCFLIATGVCFLPIVLY) traverse the membrane as a helical segment. The Periplasmic portion of the chain corresponds to 140–162 (SGALALNSLFHVGESLQISHGAA). Residues 163-183 (IWLLVILLGLAGILYAVIGGL) form a helical membrane-spanning segment. At 184 to 191 (RAMAVADS) the chain is on the cytoplasmic side. The chain crosses the membrane as a helical span at residues 192–212 (INGIGLVIGGLMVPVFGLIAM). Residues 213–240 (GKGSFMQGIEQLTTVHAEKLNSIGGPTD) lie on the Periplasmic side of the membrane. A helical membrane pass occupies residues 241–261 (PLPIGAAFTGLILVNTFYWCT). Over 262 to 283 (NQGIVQRTLASKSLAEGQKGAL) the chain is Cytoplasmic. A helical transmembrane segment spans residues 284 to 304 (LTAVLKMLDPLVLVLPGLIAF). Topologically, residues 305-324 (HLYQDLPKADMAYPTLVNNV) are periplasmic. The chain crosses the membrane as a helical span at residues 325–345 (LPVPMVGFFGAVLFGAVISTF). Topologically, residues 346-380 (NGFLNSASTLFSMGIYRRIINQNAEPQQLVTVGRK) are cytoplasmic. A helical membrane pass occupies residues 381–401 (FGFFIAIVSVLVAPWIANAPQ). Over 402–415 (GLYSWMKQLNGIYN) the chain is Periplasmic. The chain crosses the membrane as a helical span at residues 416–436 (VPLVTIIIMGFFFPRIPALAA). Position 437 (Lys-437) is a topological domain, cytoplasmic. A helical membrane pass occupies residues 438-458 (VAMGIGIISYITINYLVKFDF). The Periplasmic segment spans residues 459–460 (HF). Residues 461-481 (LYVLACTFCINVVVMLVIGFI) traverse the membrane as a helical segment. Topologically, residues 482–505 (KPRATPFTFKDAFAVDMKPWKNVK) are cytoplasmic. Residues 506-526 (IASIGILFAMIGVYAGLAEFG) traverse the membrane as a helical segment. Residues 527-532 (GYGTRW) are Periplasmic-facing. A helical transmembrane segment spans residues 533 to 553 (LAMISYFIAAVVIVYLIFDSW). Topologically, residues 554–571 (RHRHDPAVTFTPDGKDSL) are cytoplasmic.

This sequence belongs to the sodium:solute symporter (SSF) (TC 2.A.21) family.

The protein localises to the cell inner membrane. This is an uncharacterized protein from Escherichia coli (strain K12).